Reading from the N-terminus, the 303-residue chain is Cyclin-dependent kinase B1-1 (303 aa).

The Protein kinase domain maps to 4–295 (YEKLEKVGEG…AKAAMEHPYF (292 aa)). Residues 10 to 18 (VGEGTYGKV) and Lys33 contribute to the ATP site. A Phosphothreonine modification is found at Thr14. Residue Tyr15 is modified to Phosphotyrosine. Asp136 acts as the Proton acceptor in catalysis. Phosphothreonine is present on Thr170.

This sequence belongs to the protein kinase superfamily. CMGC Ser/Thr protein kinase family. CDC2/CDKX subfamily. In terms of tissue distribution, expressed in actively dividing cells: root and shoot apical meristems, and young leaves.

It catalyses the reaction L-seryl-[protein] + ATP = O-phospho-L-seryl-[protein] + ADP + H(+). The catalysed reaction is L-threonyl-[protein] + ATP = O-phospho-L-threonyl-[protein] + ADP + H(+). It carries out the reaction [DNA-directed RNA polymerase] + ATP = phospho-[DNA-directed RNA polymerase] + ADP + H(+). The polypeptide is Cyclin-dependent kinase B1-1 (CDKB1-1) (Oryza sativa subsp. japonica (Rice)).